A 171-amino-acid polypeptide reads, in one-letter code: Co-chaperone protein HscB homolog (171 aa).

The 73-residue stretch at 2–74 folds into the J domain; sequence NHFELFGLPS…ISRAEYILAE (73 aa).

Belongs to the HscB family. As to quaternary structure, interacts with HscA and stimulates its ATPase activity.

Its function is as follows. Co-chaperone involved in the maturation of iron-sulfur cluster-containing proteins. Seems to help targeting proteins to be folded toward HscA. The polypeptide is Co-chaperone protein HscB homolog (Vibrio parahaemolyticus serotype O3:K6 (strain RIMD 2210633)).